The following is a 282-amino-acid chain: Bis(5'-nucleosyl)-tetraphosphatase, symmetrical (282 aa).

The protein belongs to the Ap4A hydrolase family.

The catalysed reaction is P(1),P(4)-bis(5'-adenosyl) tetraphosphate + H2O = 2 ADP + 2 H(+). Functionally, hydrolyzes diadenosine 5',5'''-P1,P4-tetraphosphate to yield ADP. In Klebsiella pneumoniae (strain 342), this protein is Bis(5'-nucleosyl)-tetraphosphatase, symmetrical.